The primary structure comprises 366 residues: Chorismate synthase (366 aa).

NADP(+)-binding residues include R48 and R54. FMN is bound by residues 125-127 (RSS), 238-239 (NA), G278, 293-297 (KPTSS), and R319.

It belongs to the chorismate synthase family. Homotetramer. FMNH2 serves as cofactor.

The catalysed reaction is 5-O-(1-carboxyvinyl)-3-phosphoshikimate = chorismate + phosphate. It functions in the pathway metabolic intermediate biosynthesis; chorismate biosynthesis; chorismate from D-erythrose 4-phosphate and phosphoenolpyruvate: step 7/7. Functionally, catalyzes the anti-1,4-elimination of the C-3 phosphate and the C-6 proR hydrogen from 5-enolpyruvylshikimate-3-phosphate (EPSP) to yield chorismate, which is the branch point compound that serves as the starting substrate for the three terminal pathways of aromatic amino acid biosynthesis. This reaction introduces a second double bond into the aromatic ring system. This is Chorismate synthase from Burkholderia multivorans (strain ATCC 17616 / 249).